The sequence spans 232 residues: tRNA1(Val) (adenine(37)-N6)-methyltransferase (232 aa).

This sequence belongs to the methyltransferase superfamily. tRNA (adenine-N(6)-)-methyltransferase family.

It is found in the cytoplasm. The enzyme catalyses adenosine(37) in tRNA1(Val) + S-adenosyl-L-methionine = N(6)-methyladenosine(37) in tRNA1(Val) + S-adenosyl-L-homocysteine + H(+). Functionally, specifically methylates the adenine in position 37 of tRNA(1)(Val) (anticodon cmo5UAC). This chain is tRNA1(Val) (adenine(37)-N6)-methyltransferase, found in Haemophilus influenzae (strain PittGG).